We begin with the raw amino-acid sequence, 93 residues long: 3-isopropylmalate dehydratase small subunit (93 aa).

This sequence belongs to the LeuD family. LeuD type 1 subfamily. As to quaternary structure, heterodimer of LeuC and LeuD.

The enzyme catalyses (2R,3S)-3-isopropylmalate = (2S)-2-isopropylmalate. It functions in the pathway amino-acid biosynthesis; L-leucine biosynthesis; L-leucine from 3-methyl-2-oxobutanoate: step 2/4. Catalyzes the isomerization between 2-isopropylmalate and 3-isopropylmalate, via the formation of 2-isopropylmaleate. This is 3-isopropylmalate dehydratase small subunit (leuD) from Actinoplanes teichomyceticus.